The sequence spans 507 residues: ATP synthase subunit alpha, chloroplastic (507 aa).

170–177 (GDRQTGKT) contributes to the ATP binding site.

Belongs to the ATPase alpha/beta chains family. As to quaternary structure, F-type ATPases have 2 components, CF(1) - the catalytic core - and CF(0) - the membrane proton channel. CF(1) has five subunits: alpha(3), beta(3), gamma(1), delta(1), epsilon(1). CF(0) has four main subunits: a, b, b' and c.

The protein localises to the plastid. The protein resides in the chloroplast thylakoid membrane. The catalysed reaction is ATP + H2O + 4 H(+)(in) = ADP + phosphate + 5 H(+)(out). In terms of biological role, produces ATP from ADP in the presence of a proton gradient across the membrane. The alpha chain is a regulatory subunit. This Liriodendron tulipifera (Tuliptree) protein is ATP synthase subunit alpha, chloroplastic.